A 431-amino-acid polypeptide reads, in one-letter code: Chaperone SurA (431 aa).

Residues 1–20 (MKNWRTFILGLALCANGALA) form the signal peptide. 2 PpiC domains span residues 171–272 (GAEF…KVND) and 282–382 (VTEV…QLID).

It is found in the periplasm. The catalysed reaction is [protein]-peptidylproline (omega=180) = [protein]-peptidylproline (omega=0). In terms of biological role, chaperone involved in the correct folding and assembly of outer membrane proteins. Recognizes specific patterns of aromatic residues and the orientation of their side chains, which are found more frequently in integral outer membrane proteins. May act in both early periplasmic and late outer membrane-associated steps of protein maturation. This chain is Chaperone SurA, found in Sodalis glossinidius (strain morsitans).